The sequence spans 416 residues: Glutamyl-tRNA reductase (416 aa).

Residues threonine 49–arginine 52, serine 105, glutamate 110–glutamine 112, and glutamine 116 contribute to the substrate site. The active-site Nucleophile is the cysteine 50. Residue glycine 185–isoleucine 190 participates in NADP(+) binding.

The protein belongs to the glutamyl-tRNA reductase family. As to quaternary structure, homodimer.

The enzyme catalyses (S)-4-amino-5-oxopentanoate + tRNA(Glu) + NADP(+) = L-glutamyl-tRNA(Glu) + NADPH + H(+). It participates in porphyrin-containing compound metabolism; protoporphyrin-IX biosynthesis; 5-aminolevulinate from L-glutamyl-tRNA(Glu): step 1/2. In terms of biological role, catalyzes the NADPH-dependent reduction of glutamyl-tRNA(Glu) to glutamate 1-semialdehyde (GSA). The sequence is that of Glutamyl-tRNA reductase from Nitrosomonas europaea (strain ATCC 19718 / CIP 103999 / KCTC 2705 / NBRC 14298).